A 206-amino-acid polypeptide reads, in one-letter code: MSYSDQRELAPHMALVPMVVEQTSRGERSYDIFSRLLKERIIFLTGQVEDHMANLIVAQMLFLEAENPEKDIHLYINSPGGVITAGMSIYDTMQFIKPDVSTICMGQACSMGSFLLAAGAQGKRFCLPNSRVMIHQPLGGFQGQATDIEIHAKEILSIKARMNTLMAKHSGQPIEVIERDTERDRFMSAQDAVEYGLVDAVLTQRA.

Ser110 acts as the Nucleophile in catalysis. His135 is a catalytic residue.

It belongs to the peptidase S14 family. As to quaternary structure, fourteen ClpP subunits assemble into 2 heptameric rings which stack back to back to give a disk-like structure with a central cavity, resembling the structure of eukaryotic proteasomes.

It is found in the cytoplasm. The catalysed reaction is Hydrolysis of proteins to small peptides in the presence of ATP and magnesium. alpha-casein is the usual test substrate. In the absence of ATP, only oligopeptides shorter than five residues are hydrolyzed (such as succinyl-Leu-Tyr-|-NHMec, and Leu-Tyr-Leu-|-Tyr-Trp, in which cleavage of the -Tyr-|-Leu- and -Tyr-|-Trp bonds also occurs).. Cleaves peptides in various proteins in a process that requires ATP hydrolysis. Has a chymotrypsin-like activity. Plays a major role in the degradation of misfolded proteins. This Edwardsiella ictaluri (strain 93-146) protein is ATP-dependent Clp protease proteolytic subunit.